Here is a 305-residue protein sequence, read N- to C-terminus: Probable L-ribulose-5-phosphate 3-epimerase UlaE (305 aa).

Belongs to the L-ribulose-5-phosphate 3-epimerase family.

The enzyme catalyses L-ribulose 5-phosphate = L-xylulose 5-phosphate. It functions in the pathway cofactor degradation; L-ascorbate degradation; D-xylulose 5-phosphate from L-ascorbate: step 3/4. Functionally, catalyzes the isomerization of L-xylulose-5-phosphate to L-ribulose-5-phosphate. Is involved in the anaerobic L-ascorbate utilization. This is Probable L-ribulose-5-phosphate 3-epimerase UlaE (ulaE) from Mycoplasma pneumoniae (strain ATCC 29342 / M129 / Subtype 1) (Mycoplasmoides pneumoniae).